The chain runs to 411 residues: Multidrug resistance protein MdtA (411 aa).

The N-terminal stretch at 1–19 (MNAKRIRGLLILAAVIAIA) is a signal peptide. Polar residues predominate over residues 31-49 (PAAPGTSEQHAARTSHSEN). Residues 31–58 (PAAPGTSEQHAARTSHSENSGSGGGRRA) are disordered.

Belongs to the membrane fusion protein (MFP) (TC 8.A.1) family. In terms of assembly, part of a tripartite efflux system composed of MdtA, MdtB and MdtC.

The protein localises to the cell inner membrane. This chain is Multidrug resistance protein MdtA, found in Pectobacterium atrosepticum (strain SCRI 1043 / ATCC BAA-672) (Erwinia carotovora subsp. atroseptica).